Consider the following 293-residue polypeptide: Exosome complex component RRP4 (293 aa).

The S1 motif domain occupies 79 to 159 (EVGDIVVGRI…SDGAVSLHTR (81 aa)). A Phosphoserine modification is found at Ser-124.

It belongs to the RRP4 family. As to quaternary structure, component of the RNA exosome core complex (Exo-9), composed of EXOSC1, EXOSC2, EXOSC3, EXOSC4, EXOSC5, EXOSC6, EXOSC7, EXOSC8 and EXOSC9; within the complex interacts with EXOSC4 and EXOSC7. The catalytically inactive RNA exosome core complex (Exo-9) associates with the catalytic subunit EXOSC10/RRP6. Exo-9 may associate with DIS3 to form the nucleolar exosome complex, or DIS3L to form the cytoplasmic exosome complex. Exo-9 is formed by a hexameric base ring consisting of the heterodimers EXOSC4-EXOSC9, EXOSC5-EXOSC8 and EXOSC6-EXOSC7, and a cap ring consisting of EXOSC1, EXOSC2 and EXOSC3. The RNA exosome complex associates with cofactors C1D/RRP47, MPHOSPH6/MPP6 and MTREX/MTR4. Interacts with GTPBP1. Interacts with ZFP36L1 (via N-terminus).

The protein resides in the cytoplasm. It localises to the nucleus. The protein localises to the nucleolus. Functionally, non-catalytic component of the RNA exosome complex which has 3'-&gt;5' exoribonuclease activity and participates in a multitude of cellular RNA processing and degradation events. In the nucleus, the RNA exosome complex is involved in proper maturation of stable RNA species such as rRNA, snRNA and snoRNA, in the elimination of RNA processing by-products and non-coding 'pervasive' transcripts, such as antisense RNA species and promoter-upstream transcripts (PROMPTs), and of mRNAs with processing defects, thereby limiting or excluding their export to the cytoplasm. The RNA exosome may be involved in Ig class switch recombination (CSR) and/or Ig variable region somatic hypermutation (SHM) by targeting AICDA deamination activity to transcribed dsDNA substrates. In the cytoplasm, the RNA exosome complex is involved in general mRNA turnover and specifically degrades inherently unstable mRNAs containing AU-rich elements (AREs) within their 3' untranslated regions, and in RNA surveillance pathways, preventing translation of aberrant mRNAs. It seems to be involved in degradation of histone mRNA. The catalytic inactive RNA exosome core complex of 9 subunits (Exo-9) is proposed to play a pivotal role in the binding and presentation of RNA for ribonucleolysis, and to serve as a scaffold for the association with catalytic subunits and accessory proteins or complexes. EXOSC2 as peripheral part of the Exo-9 complex stabilizes the hexameric ring of RNase PH-domain subunits through contacts with EXOSC4 and EXOSC7. The protein is Exosome complex component RRP4 (EXOSC2) of Bos taurus (Bovine).